The following is a 930-amino-acid chain: Dual serine/threonine and tyrosine protein kinase (930 aa).

The stretch at 383–428 (RKENELYESLMNIANRKQEEMKDMIIETLSNMKEELLEDAANMEFK) forms a coiled coil. The region spanning 653-907 (PKLGRELGRG…PLLGIVQPML (255 aa)) is the Protein kinase domain. Residues 659 to 667 (LGRGQYGVV) and Lys682 each bind ATP. The active-site Proton acceptor is Asp778.

This sequence belongs to the protein kinase superfamily. Ser/Thr protein kinase family. Widely expressed with the highest expression in brain and ovary.

The protein resides in the cytoplasm. The protein localises to the cell membrane. It is found in the apical cell membrane. It localises to the basolateral cell membrane. Its subcellular location is the cell junction. It catalyses the reaction L-seryl-[protein] + ATP = O-phospho-L-seryl-[protein] + ADP + H(+). It carries out the reaction L-threonyl-[protein] + ATP = O-phospho-L-threonyl-[protein] + ADP + H(+). The enzyme catalyses L-tyrosyl-[protein] + ATP = O-phospho-L-tyrosyl-[protein] + ADP + H(+). May act as a positive regulator of ERK phosphorylation downstream of fibroblast growth factor-receptor activation. May induce both caspase-dependent apoptosis and caspase-independent cell death. In Gallus gallus (Chicken), this protein is Dual serine/threonine and tyrosine protein kinase (DSTYK).